We begin with the raw amino-acid sequence, 871 residues long: MPEFSDKQIQSHTPMMQQYLRIKAEHADMLLFYRMGDFYELFFEDAKRSAQLLDISLTARGQSNGEPIPMAGVPYHAVENYLARLVNMGESVAICEQIGDPATSKGPVERKVVRIVTPGTVTDESLLAEKRQNLLVAICPLNPKQPEAEYAISSLELSSGRFWLTKAHSSEQLAAEMQRLEPAELLYPESISLAGLPLAKAKCKRRPAWEFEQQTAFMLLTRQFGTQHLEGFGIKNNEPTLAAAGAILHYVKETQRAALPHIQALITEHPQDAIILDAATRRNLELQQSMGEGDTHLSAVLDKTVSAMGSRQFQRWLQRPIRNHQELNQRYDAVDALKENLNFENIQLTLKQLADIERIVARVGLRSARPKDFARLRDSLAKIPEVRASLSHRSLSYLHDIIEPFPEVVDLLTKAVIEQPPLLIRDGGVIAEGYDKELDELRDLATGATDYLKQLEQRERERSGIATLKVGYNRVHGYFIEVSRQSSEAVPDDYQRRQTLKNTERYIIPELKEHEDKVLNAQARSLAREKWLYDQLFEHLLPQVTALQKSASGLAQLDTLCCFARLADNYRYCRPQLQKETSLIELEAARHPVIEQLSDEPFIANPMSLTPQQRMLMITGPNMGGKSTYMRQAALIVILAHMGCYVPADKAIIGDIDRIFTRIGASDDLASGRSTFMVEMTETANILHNATAKSLVLMDEIGRGTSTYDGLSLAWSCADYLSRQLQCLTLFATHYFELTELAEELPATVNVHVDAKEHGDTIAFLHKVSPGAASQSFGLQVAKLAGVPEHVIHKAKQKLSELEHTHHGGLNEPKQATMELTPPPEAIPSHTEKRNPLLDELEQLDINDLTPKQALDILYQWQQKQKGSTQS.

An ATP-binding site is contributed by G620 to S627. The segment at H806–L837 is disordered.

This sequence belongs to the DNA mismatch repair MutS family.

Functionally, this protein is involved in the repair of mismatches in DNA. It is possible that it carries out the mismatch recognition step. This protein has a weak ATPase activity. In Idiomarina loihiensis (strain ATCC BAA-735 / DSM 15497 / L2-TR), this protein is DNA mismatch repair protein MutS.